Here is a 171-residue protein sequence, read N- to C-terminus: 3-hydroxydecanoyl-[acyl-carrier-protein] dehydratase (171 aa).

The active site involves H70.

Belongs to the thioester dehydratase family. FabA subfamily. As to quaternary structure, homodimer.

The protein localises to the cytoplasm. It catalyses the reaction a (3R)-hydroxyacyl-[ACP] = a (2E)-enoyl-[ACP] + H2O. The enzyme catalyses (3R)-hydroxydecanoyl-[ACP] = (2E)-decenoyl-[ACP] + H2O. The catalysed reaction is (2E)-decenoyl-[ACP] = (3Z)-decenoyl-[ACP]. It functions in the pathway lipid metabolism; fatty acid biosynthesis. Its function is as follows. Necessary for the introduction of cis unsaturation into fatty acids. Catalyzes the dehydration of (3R)-3-hydroxydecanoyl-ACP to E-(2)-decenoyl-ACP and then its isomerization to Z-(3)-decenoyl-ACP. Can catalyze the dehydratase reaction for beta-hydroxyacyl-ACPs with saturated chain lengths up to 16:0, being most active on intermediate chain length. This Pseudomonas putida (strain W619) protein is 3-hydroxydecanoyl-[acyl-carrier-protein] dehydratase.